The sequence spans 283 residues: Transmembrane protein 119 (283 aa).

Residues 1–25 form the signal peptide; that stretch reads MVSAAAPSLLILLLLLLGSVPATDA. The Extracellular segment spans residues 26 to 96; the sequence is RSVPLKATFL…IVDFFRQYVM (71 aa). S41 is a glycosylation site (O-linked (Xyl...) (chondroitin sulfate) serine). Residues 43-52 are compositionally biased toward low complexity; the sequence is EAEGSSASSP. Residues 43–76 are disordered; it reads EAEGSSASSPSLPPPWTPALSPTSMGPQPITLGG. Residues 97–117 traverse the membrane as a helical segment; that stretch reads LIAVVGSLAFLLMFIVCAAVI. The Cytoplasmic segment spans residues 118–283; it reads TRQKQKASAY…CACSSVHPSV (166 aa). Disordered stretches follow at residues 136-168 and 183-283; these read KYVDQSDRAGGPRAFSEVPDRAPDSRPEEALDS and LKSP…HPSV. 2 stretches are compositionally biased toward basic and acidic residues: residues 153–164 and 198–213; these read VPDRAPDSRPEE and RMVEGRGAEEEEKGSQ. The span at 238 to 264 shows a compositional bias: low complexity; the sequence is GVLEGAVVAGEGQGELEGSLLLAQEAQ. A Phosphoserine modification is found at S272.

Interacts with SMAD1, SMAD5 and RUNX2. As to expression, expressed in brain microglia (at protein level). Detected in urine (at protein level). Elevated expression levels seen in the brain of patients with Alzheimer disease. Expressed by osteoblast-like cells in bone tissues and follicular dendritic cells in lymphoid tissues.

It localises to the cell membrane. It is found in the cytoplasm. The protein localises to the endoplasmic reticulum membrane. Its subcellular location is the secreted. Functionally, plays an important role in bone formation and normal bone mineralization. Promotes the differentiation of myoblasts into osteoblasts. May induce the commitment and differentiation of myoblasts into osteoblasts through an enhancement of BMP2 production and interaction with the BMP-RUNX2 pathway. Up-regulates the expression of ATF4, a transcription factor which plays a central role in osteoblast differentiation. Essential for normal spermatogenesis and late testicular differentiation. This chain is Transmembrane protein 119 (TMEM119), found in Homo sapiens (Human).